The sequence spans 117 residues: Immunoglobulin lambda variable 1-51 (117 aa).

The signal sequence occupies residues 1 to 19; the sequence is MTCSPLLLTLLIHCTGSWA. Glutamine 20 is subject to Pyrrolidone carboxylic acid. Residues 20 to 44 are framework-1; sequence QSVLTQPPSVSAAPGQKVTISCSGS. An Ig-like domain is found at 20–117; that stretch reads QSVLTQPPSV…CGTWDSSLSA (98 aa). Cysteine 41 and cysteine 108 are oxidised to a cystine. Residues 45–52 form a complementarity-determining-1 region; it reads SSNIGNNY. Residues 53–69 form a framework-2 region; the sequence is VSWYQQLPGTAPKLLIY. A complementarity-determining-2 region spans residues 70 to 72; sequence DNN. Residues 73–108 are framework-3; that stretch reads KRPSGIPDRFSGSKSGTSATLGITGLQTGDEADYYC. The interval 109–117 is complementarity-determining-3; the sequence is GTWDSSLSA.

In terms of assembly, immunoglobulins are composed of two identical heavy chains and two identical light chains; disulfide-linked.

The protein resides in the secreted. It is found in the cell membrane. Its function is as follows. V region of the variable domain of immunoglobulin light chains that participates in the antigen recognition. Immunoglobulins, also known as antibodies, are membrane-bound or secreted glycoproteins produced by B lymphocytes. In the recognition phase of humoral immunity, the membrane-bound immunoglobulins serve as receptors which, upon binding of a specific antigen, trigger the clonal expansion and differentiation of B lymphocytes into immunoglobulins-secreting plasma cells. Secreted immunoglobulins mediate the effector phase of humoral immunity, which results in the elimination of bound antigens. The antigen binding site is formed by the variable domain of one heavy chain, together with that of its associated light chain. Thus, each immunoglobulin has two antigen binding sites with remarkable affinity for a particular antigen. The variable domains are assembled by a process called V-(D)-J rearrangement and can then be subjected to somatic hypermutations which, after exposure to antigen and selection, allow affinity maturation for a particular antigen. The sequence is that of Immunoglobulin lambda variable 1-51 from Homo sapiens (Human).